The primary structure comprises 195 residues: Glycerol-3-phosphate acyltransferase (195 aa).

Transmembrane regions (helical) follow at residues 4 to 24 (GLIL…GLLL), 53 to 73 (GLAA…VLIA), 80 to 100 (TAVW…WLGF), 110 to 130 (LGVL…IWLA), 133 to 153 (FLFR…PIAL), and 154 to 174 (YFLS…IVFI).

It belongs to the PlsY family. In terms of assembly, probably interacts with PlsX.

It is found in the cell inner membrane. It catalyses the reaction an acyl phosphate + sn-glycerol 3-phosphate = a 1-acyl-sn-glycero-3-phosphate + phosphate. It functions in the pathway lipid metabolism; phospholipid metabolism. In terms of biological role, catalyzes the transfer of an acyl group from acyl-phosphate (acyl-PO(4)) to glycerol-3-phosphate (G3P) to form lysophosphatidic acid (LPA). This enzyme utilizes acyl-phosphate as fatty acyl donor, but not acyl-CoA or acyl-ACP. The sequence is that of Glycerol-3-phosphate acyltransferase from Mesorhizobium japonicum (strain LMG 29417 / CECT 9101 / MAFF 303099) (Mesorhizobium loti (strain MAFF 303099)).